Consider the following 234-residue polypeptide: Small ribosomal subunit protein uS5 (234 aa).

Residues 1-10 (MEDIKTTTPE) show a composition bias toward polar residues. Residues 1 to 69 (MEDIKTTTPE…KDGSGNKPNK (69 aa)) are disordered. Basic and acidic residues predominate over residues 11–31 (VKNEENKTSEVKEGKALEKNN). Residues 78-141 (LEEKIVGVKK…KSAKNNMYKV (64 aa)) form the S5 DRBM domain.

The protein belongs to the universal ribosomal protein uS5 family. As to quaternary structure, part of the 30S ribosomal subunit. Contacts proteins S4 and S8.

Functionally, with S4 and S12 plays an important role in translational accuracy. Its function is as follows. Located at the back of the 30S subunit body where it stabilizes the conformation of the head with respect to the body. The protein is Small ribosomal subunit protein uS5 of Malacoplasma penetrans (strain HF-2) (Mycoplasma penetrans).